We begin with the raw amino-acid sequence, 179 residues long: Bifunctional protein PyrR (179 aa).

The PRPP-binding signature appears at 97 to 109; sequence VILIDDVLFTGRT.

It belongs to the purine/pyrimidine phosphoribosyltransferase family. PyrR subfamily.

The catalysed reaction is UMP + diphosphate = 5-phospho-alpha-D-ribose 1-diphosphate + uracil. Its function is as follows. Regulates the transcription of the pyrimidine nucleotide (pyr) operon in response to exogenous pyrimidines. Functionally, also displays a weak uracil phosphoribosyltransferase activity which is not physiologically significant. The protein is Bifunctional protein PyrR of Actinobacillus pleuropneumoniae serotype 5b (strain L20).